A 238-amino-acid polypeptide reads, in one-letter code: Protein lifeguard 4 (238 aa).

Topologically, residues Met1–Val38 are cytoplasmic. A helical membrane pass occupies residues Tyr39–Phe59. The Lumenal segment spans residues Gln60–Glu68. The chain crosses the membrane as a helical span at residues Ser69–Leu89. The Cytoplasmic portion of the chain corresponds to His90–Asn97. The helical transmembrane segment at Leu98 to Phe118 threads the bilayer. Residues Tyr119–Asp120 are Lumenal-facing. A helical transmembrane segment spans residues Val121 to Tyr141. Topologically, residues Thr142–Lys151 are cytoplasmic. Residues Phe152–Phe172 traverse the membrane as a helical segment. Residues Phe173–Ser175 are Lumenal-facing. Residues Glu176–Tyr196 traverse the membrane as a helical segment. Residues Asp197 to Glu208 are Cytoplasmic-facing. Positions Glu209–Leu229 form an intramembrane region, helical. The Cytoplasmic segment spans residues Lys230–Lys238.

Belongs to the BI1 family. LFG subfamily. As to quaternary structure, interacts with ITPR3.

The protein resides in the golgi apparatus membrane. Its function is as follows. Anti-apoptotic protein which can inhibit apoptosis induced by intrinsic and extrinsic apoptotic stimuli. Can modulate both capacitative Ca2+ entry and inositol 1,4,5-trisphosphate (IP3)-mediated Ca2+ release. The polypeptide is Protein lifeguard 4 (Tmbim4) (Mus musculus (Mouse)).